The primary structure comprises 501 residues: Probable cytosol aminopeptidase (501 aa).

2 residues coordinate Mn(2+): lysine 267 and aspartate 272. Residue lysine 279 is part of the active site. Aspartate 290, aspartate 349, and glutamate 351 together coordinate Mn(2+). The active site involves arginine 353.

This sequence belongs to the peptidase M17 family. Mn(2+) serves as cofactor.

It is found in the cytoplasm. The enzyme catalyses Release of an N-terminal amino acid, Xaa-|-Yaa-, in which Xaa is preferably Leu, but may be other amino acids including Pro although not Arg or Lys, and Yaa may be Pro. Amino acid amides and methyl esters are also readily hydrolyzed, but rates on arylamides are exceedingly low.. It carries out the reaction Release of an N-terminal amino acid, preferentially leucine, but not glutamic or aspartic acids.. Its function is as follows. Presumably involved in the processing and regular turnover of intracellular proteins. Catalyzes the removal of unsubstituted N-terminal amino acids from various peptides. This chain is Probable cytosol aminopeptidase, found in Hamiltonella defensa subsp. Acyrthosiphon pisum (strain 5AT).